Consider the following 303-residue polypeptide: GTPase Era (303 aa).

An Era-type G domain is found at Lys-7–Glu-176. Residues Gly-15–Ser-22 form a G1 region. Gly-15–Ser-22 is a GTP binding site. The segment at Gln-41–Asn-45 is G2. A G3 region spans residues Asp-62–Gly-65. GTP-binding positions include Asp-62 to Val-66 and Asn-125 to Asp-128. The G4 stretch occupies residues Asn-125–Asp-128. The interval Ile-155–Ala-157 is G5. One can recognise a KH type-2 domain in the interval Thr-207–Pro-284.

Belongs to the TRAFAC class TrmE-Era-EngA-EngB-Septin-like GTPase superfamily. Era GTPase family. As to quaternary structure, monomer.

Its subcellular location is the cytoplasm. The protein resides in the cell membrane. An essential GTPase that binds both GDP and GTP, with rapid nucleotide exchange. Plays a role in 16S rRNA processing and 30S ribosomal subunit biogenesis and possibly also in cell cycle regulation and energy metabolism. This Leuconostoc citreum (strain KM20) protein is GTPase Era.